We begin with the raw amino-acid sequence, 301 residues long: MSMRIWSRSSSAYSAIARSSSWFNNSLFSSCLLRFYSNPPKKTKKNTLISLRKSAETANEKFIEKINKEHQLFKPGQIVVDLGCAPGIWSTIAARHVGLFGRVIACDIIPCRLPENSSMIQGNILSMEIQLEIAKAAIRSRNSFFRNQQDHNSASIPYLQSVFEEERDTKEKAKIEDLSADVIMSDLGPPFPMVQGFEFWISKLPYLAMQTNEHLAVKDELDSLYLAQAALLFAIKALKPDGIFLCKVLESSHLRSFAEDLSMCFKCVKKIQFKTKIKDELYAVYFCSGKQLSCHSKLLNI.

Glycine 87, tryptophan 89, aspartate 107, and aspartate 186 together coordinate S-adenosyl-L-methionine. The Proton acceptor role is filled by lysine 247.

This sequence belongs to the class I-like SAM-binding methyltransferase superfamily. RNA methyltransferase RlmE family.

It carries out the reaction a uridine in rRNA + S-adenosyl-L-methionine = a 2'-O-methyluridine in rRNA + S-adenosyl-L-homocysteine + H(+). The protein is Putative ribosomal RNA methyltransferase PB17E12.10c of Schizosaccharomyces pombe (strain 972 / ATCC 24843) (Fission yeast).